A 366-amino-acid chain; its full sequence is Peptide chain release factor 2 (366 aa).

Gln249 is modified (N5-methylglutamine).

This sequence belongs to the prokaryotic/mitochondrial release factor family. Post-translationally, methylated by PrmC. Methylation increases the termination efficiency of RF2.

It is found in the cytoplasm. Its function is as follows. Peptide chain release factor 2 directs the termination of translation in response to the peptide chain termination codons UGA and UAA. The sequence is that of Peptide chain release factor 2 from Petrotoga mobilis (strain DSM 10674 / SJ95).